The following is a 366-amino-acid chain: Galactoside alpha-(1,2)-fucosyltransferase 1 (366 aa).

Topologically, residues 1–8 (MWPLSHRH) are cytoplasmic. The helical; Signal-anchor for type II membrane protein transmembrane segment at 9–25 (LCLAFLLVCVLSAISFF) threads the bilayer. Topologically, residues 26–366 (LHIHQDSIRH…LSPLWTLAEP (341 aa)) are lumenal. Residues Asn66, Asn302, and Asn328 are each glycosylated (N-linked (GlcNAc...) asparagine).

The protein belongs to the glycosyltransferase 11 family.

The protein resides in the golgi apparatus. It is found in the golgi stack membrane. It carries out the reaction a beta-D-galactosyl-(1-&gt;4)-N-acetyl-beta-D-glucosaminyl derivative + GDP-beta-L-fucose = an alpha-L-Fuc-(1-&gt;2)-beta-D-Gal-(1-&gt;4)-beta-D-GlcNAc derivative + GDP + H(+). The catalysed reaction is a ganglioside GA1 + GDP-beta-L-fucose = a ganglioside Fuc-GA1 + GDP + H(+). The enzyme catalyses a beta-D-Gal-(1-&gt;3)-beta-D-GlcNAc-(1-&gt;3)-beta-D-Gal-(1-&gt;4)-beta-D-Glc-(1&lt;-&gt;1')-Cer(d18:1(4E)) + GDP-beta-L-fucose = alpha-L-fucosyl-(1-&gt;2)- beta-D-galactosyl-(1-&gt;3)-N-acetyl-beta-D-glucosaminyl-(1-&gt;3)-beta-D-galactosyl-(1-&gt;4)-beta-D-glucosyl-(1&lt;-&gt;1')-N-acylsphing-4-enine + GDP + H(+). It catalyses the reaction a neolactoside nLc4Cer(d18:1(4E)) + GDP-beta-L-fucose = a neolactoside IV(2)-alpha-Fuc-nLc4Cer(d18:1(4E)) + GDP + H(+). It carries out the reaction a ganglioside GM1 + GDP-beta-L-fucose = a ganglioside Fuc-GM1 + GDP + H(+). The catalysed reaction is beta-D-galactosyl-(1-&gt;3)-N-acetyl-D-galactosamine + GDP-beta-L-fucose = alpha-L-fucosyl-(1-&gt;2)-beta-D-galactosyl-(1-&gt;3)-N-acetyl-D-galactosamine + GDP + H(+). It functions in the pathway protein modification; protein glycosylation. Functionally, catalyzes the transfer of L-fucose, from a guanosine diphosphate-beta-L-fucose, to the terminal galactose residue of glycoconjugates through an alpha(1,2) linkage leading to H antigen synthesis that is an intermediate substrate in the synthesis of ABO blood group antigens. H antigen is essential for maturation of the glomerular layer of the main olfactory bulb, in cell migration and early cell-cell contacts during tumor associated angiogenesis. Preferentially fucosylates soluble lactose and to a lesser extent fucosylates glycolipids gangliosides GA1 and GM1a. This is Galactoside alpha-(1,2)-fucosyltransferase 1 from Aotus azarae (Azara's night monkey).